We begin with the raw amino-acid sequence, 427 residues long: MVWLRAPDRVVVHPSTVEGRVEAPPSKSYTHRMLFLALLARGRSVVRRPLVSNDTLATLNAVALLGGKPRLGRGVAEVEGGEVRGGAVVYAAGSGTTIRIAMGVAAHSAEATLLYGDESLNRRPVHPLSEALRSMGARVCDTGGNPPVKVSGPLRRASVEVDAAISSQFATSLLIAGSRLGEFELSAARLSSRGYVDITLESLSMFGVRVEREGYRLFRLRGTPKPVDAAVPGDYSSASFMLAAGAIAGRVEVEGLRPVDPQPDRRIVELLRSMGARVRVEGGVVAVESTGPLEPVDVDLDGSPDLAPVAAVLAAYARGVSRLRGLERLKYKESDRLSAIAWNLARLGVEARVRGGILEIRGGGVEGGVARSWGDHRIAMAMAVAGLGARRPVAVEGFSRVPDSYPGFLEDLARLGARVEAVKGGGV.

3-phosphoshikimate-binding residues include K27, S28, and R32. K27 is a binding site for phosphoenolpyruvate. Residues G95 and R123 each contribute to the phosphoenolpyruvate site. 3-phosphoshikimate contacts are provided by S166, S167, Q168, S192, D305, and K332. Position 168 (Q168) interacts with phosphoenolpyruvate. Residue D305 is the Proton acceptor of the active site. R336 and R377 together coordinate phosphoenolpyruvate.

The protein belongs to the EPSP synthase family. As to quaternary structure, monomer.

Its subcellular location is the cytoplasm. It catalyses the reaction 3-phosphoshikimate + phosphoenolpyruvate = 5-O-(1-carboxyvinyl)-3-phosphoshikimate + phosphate. It participates in metabolic intermediate biosynthesis; chorismate biosynthesis. Functionally, catalyzes the transfer of the enolpyruvyl moiety of phosphoenolpyruvate (PEP) to the 5-hydroxyl of shikimate-3-phosphate (S3P) to produce enolpyruvyl shikimate-3-phosphate and inorganic phosphate. The protein is 3-phosphoshikimate 1-carboxyvinyltransferase of Aeropyrum pernix (strain ATCC 700893 / DSM 11879 / JCM 9820 / NBRC 100138 / K1).